The chain runs to 211 residues: Glutathione S-transferase class-mu 28 kDa isozyme (211 aa).

A GST N-terminal domain is found at Asp-4–Gly-86. The glutathione site is built by Tyr-10, Arg-16, Trp-41, Lys-45, Leu-53, Glu-70, Ser-71, and Asp-104. One can recognise a GST C-terminal domain in the interval Thr-88–Phe-211.

It belongs to the GST superfamily. Mu family. In terms of assembly, homodimer.

The catalysed reaction is RX + glutathione = an S-substituted glutathione + a halide anion + H(+). In terms of biological role, conjugation of reduced glutathione to a wide number of exogenous and endogenous hydrophobic electrophiles. GST isoenzymes appear to play a central role in the parasite detoxification system. Other functions are also suspected including a role in increasing the solubility of haematin in the parasite gut. The sequence is that of Glutathione S-transferase class-mu 28 kDa isozyme from Schistosoma bovis (Blood fluke).